Reading from the N-terminus, the 373-residue chain is Flagellar P-ring protein (373 aa).

Positions 1–30 (MTNRWSFDVNKNLVTVLFTWLCLSISTAHA) are cleaved as a signal peptide.

The protein belongs to the FlgI family. In terms of assembly, the basal body constitutes a major portion of the flagellar organelle and consists of four rings (L,P,S, and M) mounted on a central rod.

It localises to the periplasm. The protein localises to the bacterial flagellum basal body. Assembles around the rod to form the L-ring and probably protects the motor/basal body from shearing forces during rotation. This is Flagellar P-ring protein from Aliivibrio fischeri (strain ATCC 700601 / ES114) (Vibrio fischeri).